Consider the following 147-residue polypeptide: Globin, polymeric component P2 (147 aa).

A Globin domain is found at 2–146 (PLTADQVAAL…ISDALVAGLE (145 aa)). Position 96 (His96) interacts with heme b.

It belongs to the globin family. Polymer.

This is Globin, polymeric component P2 from Glycera dibranchiata (Bloodworm).